The primary structure comprises 518 residues: GMP synthase [glutamine-hydrolyzing] (518 aa).

Residues 6–200 (RLLIIDFGSQ…FVRLAGFKGD (195 aa)) enclose the Glutamine amidotransferase type-1 domain. Cys-84 serves as the catalytic Nucleophile. Residues His-175 and Glu-177 contribute to the active site. The GMPS ATP-PPase domain maps to 201-393 (WTMGAYREEA…LGLPESFIGR (193 aa)). 228-234 (SGGVDSS) serves as a coordination point for ATP.

In terms of assembly, homodimer.

The catalysed reaction is XMP + L-glutamine + ATP + H2O = GMP + L-glutamate + AMP + diphosphate + 2 H(+). It participates in purine metabolism; GMP biosynthesis; GMP from XMP (L-Gln route): step 1/1. Its function is as follows. Catalyzes the synthesis of GMP from XMP. This is GMP synthase [glutamine-hydrolyzing] from Cereibacter sphaeroides (strain ATCC 17023 / DSM 158 / JCM 6121 / CCUG 31486 / LMG 2827 / NBRC 12203 / NCIMB 8253 / ATH 2.4.1.) (Rhodobacter sphaeroides).